The chain runs to 116 residues: Helper of Tim protein 13 (116 aa).

Residues 10–94 form a CHY-type; degenerate zinc finger; sequence TVDDQSRCVH…SNLICPNCRS (85 aa). The Zn(2+) site is built by C17, H19, C40, C43, C68, C71, C89, and C92.

In terms of assembly, interacts with the small Tim proteins TIM8, TIM9, TIM10, TIM12, and TIM13.

The protein resides in the mitochondrion intermembrane space. It localises to the mitochondrion membrane. In terms of biological role, required for the assembly or recycling of the small Tim proteins in the mitochondrial intermembrane, thereby participating in the import and insertion of multi-pass transmembrane proteins into the mitochondrial inner membrane. Probably acts by facilitating the formation of disulfide bonds in small Tim proteins. In Saccharomyces cerevisiae (strain ATCC 204508 / S288c) (Baker's yeast), this protein is Helper of Tim protein 13 (HOT13).